The following is a 938-amino-acid chain: Bifunctional uridylyltransferase/uridylyl-removing enzyme (938 aa).

The uridylyltransferase stretch occupies residues 1 to 379 (MPPRLRPTHL…PGRAQKRKPL (379 aa)). Residues 380-733 (DEPGFHEVGG…GRIRSELNAA (354 aa)) are uridylyl-removing. The 123-residue stretch at 495 to 617 (VDEHTLRAVG…VQSPERLRLL (123 aa)) folds into the HD domain. 2 ACT domains span residues 734 to 813 (EVVV…PVAR) and 845 to 924 (VVEA…TAQA).

Belongs to the GlnD family. It depends on Mg(2+) as a cofactor.

The catalysed reaction is [protein-PII]-L-tyrosine + UTP = [protein-PII]-uridylyl-L-tyrosine + diphosphate. It catalyses the reaction [protein-PII]-uridylyl-L-tyrosine + H2O = [protein-PII]-L-tyrosine + UMP + H(+). With respect to regulation, uridylyltransferase (UTase) activity is inhibited by glutamine, while glutamine activates uridylyl-removing (UR) activity. Modifies, by uridylylation and deuridylylation, the PII regulatory proteins (GlnB and homologs), in response to the nitrogen status of the cell that GlnD senses through the glutamine level. Under low glutamine levels, catalyzes the conversion of the PII proteins and UTP to PII-UMP and PPi, while under higher glutamine levels, GlnD hydrolyzes PII-UMP to PII and UMP (deuridylylation). Thus, controls uridylylation state and activity of the PII proteins, and plays an important role in the regulation of nitrogen assimilation and metabolism. In Phenylobacterium zucineum (strain HLK1), this protein is Bifunctional uridylyltransferase/uridylyl-removing enzyme.